Reading from the N-terminus, the 167-residue chain is NADH-quinone oxidoreductase subunit B 2 (167 aa).

Positions 39, 40, 104, and 134 each coordinate [4Fe-4S] cluster.

Belongs to the complex I 20 kDa subunit family. In terms of assembly, NDH-1 is composed of 14 different subunits. Subunits NuoB, C, D, E, F, and G constitute the peripheral sector of the complex. The cofactor is [4Fe-4S] cluster.

The protein localises to the cell inner membrane. It carries out the reaction a quinone + NADH + 5 H(+)(in) = a quinol + NAD(+) + 4 H(+)(out). Its function is as follows. NDH-1 shuttles electrons from NADH, via FMN and iron-sulfur (Fe-S) centers, to quinones in the respiratory chain. Couples the redox reaction to proton translocation (for every two electrons transferred, four hydrogen ions are translocated across the cytoplasmic membrane), and thus conserves the redox energy in a proton gradient. This chain is NADH-quinone oxidoreductase subunit B 2, found in Burkholderia mallei (strain NCTC 10247).